A 491-amino-acid polypeptide reads, in one-letter code: Mitochondrial MYO2 receptor-related protein 1 (491 aa).

A Phosphothreonine modification is found at Thr-12. 2 positions are modified to phosphoserine: Ser-16 and Ser-37. Residues 295–384 (NAEEANSREK…CKKVLKKLTE (90 aa)) adopt a coiled-coil conformation. Residues 300 to 439 (NSREKSNLDI…GTSSEEDHLT (140 aa)) form an interaction with MYO2 region. The disordered stretch occupies residues 419 to 491 (KKIEEQPDSS…LPVQVEKKEK (73 aa)). Residues 461-472 (SAISTTASVQSG) are compositionally biased toward polar residues.

Interacts with MYO2 and PCL7. In terms of processing, phosphorylated by the cyclin-CDK PCL7-PHO85.

It localises to the bud tip. It is found in the bud neck. The protein localises to the mitochondrion outer membrane. In terms of biological role, involved in the guiding of mitochondrial tubules to the bud tip during cell division. The protein is Mitochondrial MYO2 receptor-related protein 1 (MMR1) of Saccharomyces cerevisiae (strain ATCC 204508 / S288c) (Baker's yeast).